The following is a 614-amino-acid chain: Male-specific lethal 1 homolog (614 aa).

2 disordered regions span residues 1-127 (MTMR…GCSP) and 147-217 (KEPT…GASS). Serine 66 and serine 126 each carry phosphoserine. Low complexity predominate over residues 158–169 (GAASPAATASDP). The span at 170–184 (AGPPPLPLPGPPPLA) shows a compositional bias: pro residues. Low complexity predominate over residues 185 to 194 (PTATAGTLAA). Residue serine 205 is modified to Phosphoserine. A coiled-coil region spans residues 213-282 (SGASSQAACL…KDNEKERHKL (70 aa)). Positions 223–237 (KQILLLQLDLIEQQQ) are interaction with MSL2. Composition is skewed to basic and acidic residues over residues 272–281 (KKDNEKERHK) and 294–304 (TELSEKIKLEC). A disordered region spans residues 272 to 420 (KKDNEKERHK…PKEKAFSSEI (149 aa)). Lysine 301 is covalently cross-linked (Glycyl lysine isopeptide (Lys-Gly) (interchain with G-Cter in SUMO2)). Residues 317–346 (PKPFSCGRSGKGHKRKSPFGSTERKTPVKK) carry the Nuclear localization signal motif. N6-acetyllysine is present on lysine 353. Residues lysine 365 and lysine 378 each participate in a glycyl lysine isopeptide (Lys-Gly) (interchain with G-Cter in SUMO2) cross-link. Residues 376-392 (VCKRELRSQETPEKPRS) are compositionally biased toward basic and acidic residues. Serine 393 is subject to Phosphoserine. Residues 393–407 (SVDTPPRLSTPQKGP) show a composition bias toward polar residues. Threonine 396 carries the phosphothreonine modification. Phosphoserine is present on serine 442. One can recognise a PEHE domain in the interval 472-591 (VLAVPSWRDH…LTPQNFELPW (120 aa)). Positions 496 to 514 (ENLDDSVFSKRHAKLELDE) are interaction with KAT8 HAT domain. Positions 505-519 (KRHAKLELDEKRRKR) match the Bipartite nuclear localization signal motif. The sufficient for interaction with MSL3 MRG domain stretch occupies residues 550-591 (EVTSFFPEPDDVESLMITPFLPVVAFGRPLPKLTPQNFELPW).

The protein belongs to the msl-1 family. In terms of assembly, component of a multisubunit histone acetyltransferase complex (MSL) at least composed of the KAT8/MOF/MYST1, MSL1/hampin, MSL2 and MSL3. Forms a MSL heterotetrameric core with MSL2. Interacts (via PEHE domain) with KAT8 (via HAT domain) and MSL3 (via MRG domain); both interactions are direct. Directly interacts with NUPR1. Interacts with TP53BP1; this interaction may be required for MSL1 DNA repair activity, but not for histone acetyltransferase activity. Interacts with TTC4, ECM2 and PIHD1. Post-translationally, sumoylated with SUMO1.

The protein localises to the nucleus. The protein resides in the nucleoplasm. Its subcellular location is the nucleus speckle. Non-catalytic component of the MSL histone acetyltransferase complex, a multiprotein complex that mediates the majority of histone H4 acetylation at 'Lys-16' (H4K16ac), an epigenetic mark that prevents chromatin compaction. The MSL complex is required for chromosome stability and genome integrity by maintaining homeostatic levels of H4K16ac. The MSL complex is also involved in gene dosage by promoting up-regulation of genes expressed by the X chromosome. X up-regulation is required to compensate for autosomal biallelic expression. The MSL complex also participates in gene dosage compensation by promoting expression of Tsix non-coding RNA. Within the MSL complex, acts as a scaffold to tether MSL3 and KAT8 together for enzymatic activity regulation. Greatly enhances MSL2 E3 ubiquitin ligase activity, promoting monoubiquitination of histone H2B at 'Lys-34' (H2BK34Ub). This modification in turn stimulates histone H3 methylation at 'Lys-4' (H3K4me) and 'Lys-79' (H3K79me) and leads to gene activation, including that of HOXA9 and MEIS1. This is Male-specific lethal 1 homolog from Homo sapiens (Human).